Reading from the N-terminus, the 82-residue chain is Small ribosomal subunit protein bS16 (82 aa).

This sequence belongs to the bacterial ribosomal protein bS16 family.

The protein is Small ribosomal subunit protein bS16 of Synechocystis sp. (strain ATCC 27184 / PCC 6803 / Kazusa).